The primary structure comprises 1446 residues: DNA polymerase III PolC-type (1446 aa).

The 157-residue stretch at 425 to 581 (YVIFDVETTG…ADAESTGYLL (157 aa)) folds into the Exonuclease domain.

Belongs to the DNA polymerase type-C family. PolC subfamily.

The protein resides in the cytoplasm. It catalyses the reaction DNA(n) + a 2'-deoxyribonucleoside 5'-triphosphate = DNA(n+1) + diphosphate. Functionally, required for replicative DNA synthesis. This DNA polymerase also exhibits 3' to 5' exonuclease activity. This chain is DNA polymerase III PolC-type, found in Latilactobacillus sakei subsp. sakei (strain 23K) (Lactobacillus sakei subsp. sakei).